A 754-amino-acid chain; its full sequence is Exocyst complex component EXO84A (754 aa).

Disordered stretches follow at residues 514-540 (RILPQGTSQSTPRRGSSDRQNRPEQRE) and 734-754 (GHGERDVTSPSVSSAKSYTSN). Residues 518-527 (QGTSQSTPRR) show a composition bias toward polar residues. The segment covering 528–540 (GSSDRQNRPEQRE) has biased composition (basic and acidic residues). Residues 741–754 (TSPSVSSAKSYTSN) show a composition bias toward polar residues.

It belongs to the EXO84 family. As to quaternary structure, the exocyst complex is composed of SEC3, SEC5, SEC6, SEC8, SEC10, EXO70A1 and EXO84.

Functionally, component of the exocyst complex involved in the docking of exocytic vesicles with fusion sites on the plasma membrane during regulated or polarized secretion. Involved in polarized cell growth and organ morphogenesis. During cytokinesis, involved in cell plate initiation, cell plate maturation and formation of new primary cell wall. This is Exocyst complex component EXO84A (EXO84A) from Arabidopsis thaliana (Mouse-ear cress).